Consider the following 267-residue polypeptide: 4-hydroxy-tetrahydrodipicolinate reductase (267 aa).

NAD(+)-binding positions include 8 to 13 and aspartate 34; that span reads GAAGRM. Arginine 35 lines the NADP(+) pocket. Residues 98 to 100 and 122 to 125 each bind NAD(+); these read GTT and AANF. The active-site Proton donor/acceptor is histidine 155. A (S)-2,3,4,5-tetrahydrodipicolinate-binding site is contributed by histidine 156. Lysine 159 acts as the Proton donor in catalysis. 165–166 is a (S)-2,3,4,5-tetrahydrodipicolinate binding site; the sequence is GT.

This sequence belongs to the DapB family.

The protein localises to the cytoplasm. The enzyme catalyses (S)-2,3,4,5-tetrahydrodipicolinate + NAD(+) + H2O = (2S,4S)-4-hydroxy-2,3,4,5-tetrahydrodipicolinate + NADH + H(+). It carries out the reaction (S)-2,3,4,5-tetrahydrodipicolinate + NADP(+) + H2O = (2S,4S)-4-hydroxy-2,3,4,5-tetrahydrodipicolinate + NADPH + H(+). Its pathway is amino-acid biosynthesis; L-lysine biosynthesis via DAP pathway; (S)-tetrahydrodipicolinate from L-aspartate: step 4/4. Functionally, catalyzes the conversion of 4-hydroxy-tetrahydrodipicolinate (HTPA) to tetrahydrodipicolinate. This is 4-hydroxy-tetrahydrodipicolinate reductase from Pseudomonas entomophila (strain L48).